A 58-amino-acid chain; its full sequence is Protein translocase subunit SecE (58 aa).

A helical membrane pass occupies residues 36–56 (ILLIGFIGFLMFAIMSLLPGV).

It belongs to the SecE/SEC61-gamma family. Component of the Sec protein translocase complex. Heterotrimer consisting of SecY (alpha), SecG (beta) and SecE (gamma) subunits. The heterotrimers can form oligomers, although 1 heterotrimer is thought to be able to translocate proteins. Interacts with the ribosome. May interact with SecDF, and other proteins may be involved.

It is found in the cell membrane. Functionally, essential subunit of the Sec protein translocation channel SecYEG. Clamps together the 2 halves of SecY. May contact the channel plug during translocation. The sequence is that of Protein translocase subunit SecE from Halorubrum lacusprofundi (strain ATCC 49239 / DSM 5036 / JCM 8891 / ACAM 34).